The primary structure comprises 288 residues: Release factor glutamine methyltransferase (288 aa).

Residues 123–127 (GTGSG), Asp146, and Asn190 contribute to the S-adenosyl-L-methionine site. 190-193 (NPPY) is a substrate binding site.

The protein belongs to the protein N5-glutamine methyltransferase family. PrmC subfamily.

It carries out the reaction L-glutaminyl-[peptide chain release factor] + S-adenosyl-L-methionine = N(5)-methyl-L-glutaminyl-[peptide chain release factor] + S-adenosyl-L-homocysteine + H(+). Its function is as follows. Methylates the class 1 translation termination release factors RF1/PrfA and RF2/PrfB on the glutamine residue of the universally conserved GGQ motif. This is Release factor glutamine methyltransferase from Bacillus subtilis (strain 168).